A 415-amino-acid polypeptide reads, in one-letter code: Serine/threonine transporter SstT (415 aa).

8 helical membrane-spanning segments follow: residues 15–35 (GSLV…AWLA), 45–65 (LGTL…WILV), 85–105 (ILYI…SFIF), 142–162 (ALLN…GIAL), 193–213 (VGIF…ALLG), 217–237 (LLVV…PLIV), 301–321 (GAAV…GIPV), and 331–351 (VVSA…LLLI).

The protein belongs to the dicarboxylate/amino acid:cation symporter (DAACS) (TC 2.A.23) family.

The protein resides in the cell inner membrane. The catalysed reaction is L-serine(in) + Na(+)(in) = L-serine(out) + Na(+)(out). It carries out the reaction L-threonine(in) + Na(+)(in) = L-threonine(out) + Na(+)(out). Functionally, involved in the import of serine and threonine into the cell, with the concomitant import of sodium (symport system). This Photorhabdus laumondii subsp. laumondii (strain DSM 15139 / CIP 105565 / TT01) (Photorhabdus luminescens subsp. laumondii) protein is Serine/threonine transporter SstT.